Here is a 335-residue protein sequence, read N- to C-terminus: Glycerol-3-phosphate dehydrogenase [NAD(P)+] (335 aa).

NADPH contacts are provided by F11, R31, and K107. Positions 107 and 135 each coordinate sn-glycerol 3-phosphate. A139 provides a ligand contact to NADPH. K190, D245, S255, R256, and N257 together coordinate sn-glycerol 3-phosphate. Catalysis depends on K190, which acts as the Proton acceptor. Residue R256 coordinates NADPH. Positions 280 and 282 each coordinate NADPH.

It belongs to the NAD-dependent glycerol-3-phosphate dehydrogenase family.

The protein localises to the cytoplasm. It catalyses the reaction sn-glycerol 3-phosphate + NAD(+) = dihydroxyacetone phosphate + NADH + H(+). The catalysed reaction is sn-glycerol 3-phosphate + NADP(+) = dihydroxyacetone phosphate + NADPH + H(+). It functions in the pathway membrane lipid metabolism; glycerophospholipid metabolism. Catalyzes the reduction of the glycolytic intermediate dihydroxyacetone phosphate (DHAP) to sn-glycerol 3-phosphate (G3P), the key precursor for phospholipid synthesis. The polypeptide is Glycerol-3-phosphate dehydrogenase [NAD(P)+] (Anaplasma marginale (strain St. Maries)).